The primary structure comprises 21 residues: Histone H2B 1 (21 aa).

A disordered region spans residues Met-1–Ala-21. 2 positions are modified to N6-acetyllysine: Lys-6 and Lys-11. Residues Ala-8–Ala-21 are compositionally biased toward basic residues. The residue at position 13 (Ser-13) is a Phosphoserine. Residues Lys-14 and Lys-19 each carry the N6-acetyllysine modification. Lys-19 participates in a covalent cross-link: Glycyl lysine isopeptide (Lys-Gly) (interchain with G-Cter in ubiquitin).

Belongs to the histone H2B family. As to quaternary structure, the nucleosome is a histone octamer containing two molecules each of H2A, H2B, H3 and H4 assembled in one H3-H4 heterotetramer and two H2A-H2B heterodimers. The octamer wraps approximately 147 bp of DNA. Monoubiquitination at the C-terminal Lys gives a specific tag for epigenetic transcriptional activation and is also prerequisite for histone H3 'Lys-4' and 'Lys-79' methylation. In terms of processing, phosphorylated during apoptosis; which facilitates apoptotic chromatin condensation.

It is found in the nucleus. The protein localises to the chromosome. Its function is as follows. Core component of nucleosome. Nucleosomes wrap and compact DNA into chromatin, limiting DNA accessibility to the cellular machineries which require DNA as a template. Histones thereby play a central role in transcription regulation, DNA repair, DNA replication and chromosomal stability. DNA accessibility is regulated via a complex set of post-translational modifications of histones, also called histone code, and nucleosome remodeling. In terms of biological role, has broad-spectrum antimicrobial and antibacterial activity. It is important in the antimicrobial defenses of fish skin and possesses strong activity against saprolegnia, the most common fungal infection in fish. It is also inhibitory to fish bacterial pathogens, such as aeromonas hydrophila, vibrio alginolyticus and E.coli D31. In Ictalurus punctatus (Channel catfish), this protein is Histone H2B 1.